Consider the following 390-residue polypeptide: Lipid droplet-regulating VLDL assembly factor AUP1 homolog (390 aa).

Residues 1–32 (MASPEASSSGNTEDLRIEDLFHQKRNEDTIAK) lie on the Cytoplasmic side of the membrane. Residues 33–53 (IFSIIYAPVGLIILLIRVFLG) lie within the membrane without spanning it. Topologically, residues 54 to 390 (FHTFIVACLL…NRQKYMNRDS (337 aa)) are cytoplasmic. The CUE domain maps to 305–347 (QMDECAMRIKQSFPSFHLSAIRRDLEKTRSQTTTVNNLKAGKI).

The protein belongs to the AUP1 family.

It is found in the endoplasmic reticulum membrane. The protein localises to the lipid droplet. The chain is Lipid droplet-regulating VLDL assembly factor AUP1 homolog from Caenorhabditis elegans.